A 213-amino-acid polypeptide reads, in one-letter code: Pyrrolidone-carboxylate peptidase (213 aa).

Active-site residues include Glu-81, Cys-144, and His-166.

Belongs to the peptidase C15 family. In terms of assembly, homotetramer.

It localises to the cytoplasm. The enzyme catalyses Release of an N-terminal pyroglutamyl group from a polypeptide, the second amino acid generally not being Pro.. Functionally, removes 5-oxoproline from various penultimate amino acid residues except L-proline. The chain is Pyrrolidone-carboxylate peptidase from Pseudomonas fluorescens (strain SBW25).